The sequence spans 255 residues: Ribosomal RNA small subunit methyltransferase A (255 aa).

Asn13, Leu15, Gly40, Glu61, Asp85, and Asn103 together coordinate S-adenosyl-L-methionine.

This sequence belongs to the class I-like SAM-binding methyltransferase superfamily. rRNA adenine N(6)-methyltransferase family. RsmA subfamily.

It localises to the cytoplasm. It carries out the reaction adenosine(1518)/adenosine(1519) in 16S rRNA + 4 S-adenosyl-L-methionine = N(6)-dimethyladenosine(1518)/N(6)-dimethyladenosine(1519) in 16S rRNA + 4 S-adenosyl-L-homocysteine + 4 H(+). Functionally, specifically dimethylates two adjacent adenosines (A1518 and A1519) in the loop of a conserved hairpin near the 3'-end of 16S rRNA in the 30S particle. May play a critical role in biogenesis of 30S subunits. This Dechloromonas aromatica (strain RCB) protein is Ribosomal RNA small subunit methyltransferase A.